The primary structure comprises 376 residues: 3-dehydroquinate synthase (376 aa).

Residues 115–119 (GVIGD), 139–140 (TS), Lys-152, and Lys-161 contribute to the NAD(+) site. 3 residues coordinate Zn(2+): Glu-194, His-256, and His-275.

This sequence belongs to the sugar phosphate cyclases superfamily. Dehydroquinate synthase family. The cofactor is Co(2+). Zn(2+) is required as a cofactor. NAD(+) serves as cofactor.

The protein localises to the cytoplasm. It catalyses the reaction 7-phospho-2-dehydro-3-deoxy-D-arabino-heptonate = 3-dehydroquinate + phosphate. It participates in metabolic intermediate biosynthesis; chorismate biosynthesis; chorismate from D-erythrose 4-phosphate and phosphoenolpyruvate: step 2/7. Its function is as follows. Catalyzes the conversion of 3-deoxy-D-arabino-heptulosonate 7-phosphate (DAHP) to dehydroquinate (DHQ). The polypeptide is 3-dehydroquinate synthase (Rhizobium leguminosarum bv. trifolii (strain WSM2304)).